Reading from the N-terminus, the 542-residue chain is CTP synthase (542 aa).

The tract at residues 1-265 is amidoligase domain; sequence MTRYIFVTGG…DDFVVERFGL (265 aa). S13 is a CTP binding site. Position 13 (S13) interacts with UTP. ATP-binding positions include 14-19 and D71; that span reads SLGKGI. D71 and E139 together coordinate Mg(2+). Residues 146–148, 186–191, and K222 each bind CTP; these read DIE and KTKPTQ. UTP-binding positions include 186–191 and K222; that span reads KTKPTQ. One can recognise a Glutamine amidotransferase type-1 domain in the interval 290 to 541; it reads TIAMVGKYME…VKAALAQKNK (252 aa). G351 lines the L-glutamine pocket. The active-site Nucleophile; for glutamine hydrolysis is the C378. L-glutamine contacts are provided by residues 379 to 382, E402, and R469; that span reads LGMQ. Residues H514 and E516 contribute to the active site.

This sequence belongs to the CTP synthase family. As to quaternary structure, homotetramer.

It catalyses the reaction UTP + L-glutamine + ATP + H2O = CTP + L-glutamate + ADP + phosphate + 2 H(+). The catalysed reaction is L-glutamine + H2O = L-glutamate + NH4(+). It carries out the reaction UTP + NH4(+) + ATP = CTP + ADP + phosphate + 2 H(+). It participates in pyrimidine metabolism; CTP biosynthesis via de novo pathway; CTP from UDP: step 2/2. Its activity is regulated as follows. Allosterically activated by GTP, when glutamine is the substrate; GTP has no effect on the reaction when ammonia is the substrate. The allosteric effector GTP functions by stabilizing the protein conformation that binds the tetrahedral intermediate(s) formed during glutamine hydrolysis. Inhibited by the product CTP, via allosteric rather than competitive inhibition. Catalyzes the ATP-dependent amination of UTP to CTP with either L-glutamine or ammonia as the source of nitrogen. Regulates intracellular CTP levels through interactions with the four ribonucleotide triphosphates. The sequence is that of CTP synthase from Pseudomonas putida (strain W619).